Reading from the N-terminus, the 80-residue chain is Exodeoxyribonuclease 7 small subunit (80 aa).

Belongs to the XseB family. As to quaternary structure, heterooligomer composed of large and small subunits.

The protein resides in the cytoplasm. The catalysed reaction is Exonucleolytic cleavage in either 5'- to 3'- or 3'- to 5'-direction to yield nucleoside 5'-phosphates.. Functionally, bidirectionally degrades single-stranded DNA into large acid-insoluble oligonucleotides, which are then degraded further into small acid-soluble oligonucleotides. In Pseudomonas entomophila (strain L48), this protein is Exodeoxyribonuclease 7 small subunit.